A 106-amino-acid chain; its full sequence is UPF0145 protein CPF_0876 (106 aa).

The protein belongs to the UPF0145 family.

In Clostridium perfringens (strain ATCC 13124 / DSM 756 / JCM 1290 / NCIMB 6125 / NCTC 8237 / Type A), this protein is UPF0145 protein CPF_0876.